The following is a 346-amino-acid chain: Inner membrane protein YnjI (346 aa).

The Periplasmic segment spans residues 1–38 (MKKVLLQNHPGSEKYSFNGWEIFNSNFERMIKENKAML). The helical transmembrane segment at 39–59 (LCKWGFYLTCVVAVMFVFAAI) threads the bilayer. Topologically, residues 60-68 (TSNGLNERG) are cytoplasmic. Residues 69 to 89 (LITAGCSFLYLLIMMGLIVRA) traverse the membrane as a helical segment. Over 90-234 (GFKAKKEQLH…DCANHSSGKS (145 aa)) the chain is Periplasmic. The helical transmembrane segment at 235-255 (SAKLIWAAELSWMISISSTAF) threads the bilayer. The Cytoplasmic portion of the chain corresponds to 256–346 (QNGTIEEELA…PWGASSVKYS (91 aa)).

It is found in the cell inner membrane. This is Inner membrane protein YnjI (ynjI) from Escherichia coli (strain K12).